The primary structure comprises 368 residues: Quinolinate synthase (368 aa).

Iminosuccinate-binding residues include His46 and Ser63. Cys110 is a [4Fe-4S] cluster binding site. Iminosuccinate-binding positions include 141-143 and Ser162; that span reads YVN. Residue Cys230 participates in [4Fe-4S] cluster binding. Iminosuccinate-binding positions include 256–258 and Thr273; that span reads HPE. Cys320 provides a ligand contact to [4Fe-4S] cluster.

The protein belongs to the quinolinate synthase family. Type 3 subfamily. Homotrimer. It depends on [4Fe-4S] cluster as a cofactor.

Its subcellular location is the cytoplasm. It catalyses the reaction iminosuccinate + dihydroxyacetone phosphate = quinolinate + phosphate + 2 H2O + H(+). It participates in cofactor biosynthesis; NAD(+) biosynthesis; quinolinate from iminoaspartate: step 1/1. Its function is as follows. Catalyzes the condensation of iminoaspartate with dihydroxyacetone phosphate to form quinolinate. The protein is Quinolinate synthase of Bacillus subtilis (strain 168).